We begin with the raw amino-acid sequence, 871 residues long: Translation initiation factor IF-2 (871 aa).

Disordered stretches follow at residues 60–101 and 184–203; these read KKNI…QEVK and ESLKKKKKEKKSFVASKKES. The span at 61–72 shows a compositional bias: basic residues; it reads KNIKTPTAKKPK. Residues 73 to 101 are compositionally biased toward basic and acidic residues; sequence KENIKEQEKLNESEKKEPKKEEKLKQEVK. The 168-residue stretch at 370–537 folds into the tr-type G domain; sequence TRAPVITIMG…IVLLQADILE (168 aa). The G1 stretch occupies residues 379–386; sequence GHVDHGKT. Residue 379–386 coordinates GTP; the sequence is GHVDHGKT. Residues 404-408 are G2; sequence GITQH. Residues 425–428 form a G3 region; that stretch reads DTPG. GTP is bound by residues 425–429 and 479–482; these read DTPGH and NKMD. The segment at 479–482 is G4; that stretch reads NKMD. Positions 515–517 are G5; that stretch reads SAK.

The protein belongs to the TRAFAC class translation factor GTPase superfamily. Classic translation factor GTPase family. IF-2 subfamily.

The protein localises to the cytoplasm. Functionally, one of the essential components for the initiation of protein synthesis. Protects formylmethionyl-tRNA from spontaneous hydrolysis and promotes its binding to the 30S ribosomal subunits. Also involved in the hydrolysis of GTP during the formation of the 70S ribosomal complex. The chain is Translation initiation factor IF-2 from Campylobacter jejuni subsp. jejuni serotype O:23/36 (strain 81-176).